The chain runs to 613 residues: MSKIIGIDLGTTNSCVAVLEGGEPKVIANAEGARTTPSVVAFKNGERQVGEVAKRQSITNPNTIMSVKRHMGTDYKVEVEGKNYTPQEISAIILQHLKSYAEGYLGEEVTKAVITVPAYFNDAERQATKDAGKIAGLEVERIINEPTAAALAYGLDKTDEDQTILVYDLGGGTFDVSVLELGDGVFEVRSTAGDNRLGGDDFDQVIIDHLVAEFKKENGIDLSKDKMALQRLKDAAEKAKKDLSGVSSTQISLPFITAGDAGPLHLELTLTRAKFEELSADLVERTMTPVRQSLKDAGLSASEIDKVILVGGSTRIPAVQEAIKKETGKEPHKGVNPDEVVALGAAIQGGVITGDVKDVVLLDVTPLSLGIETMGGVFTKLIERNTTIPTSKSQVFSTAADNQTAVDIHVLQGERPMAADNKTLGRFQLTDIPPAPRGVPQIEVSFDIDKNGIVNVRAKDMGTGKEQNITIKSSSGLSDDEIEKMVKEAEENAEADAKKKEEIEVRNEADQLVFTTEKTLKDLEGKIDEEQVKKANDAKDALKAAIEKGELEDIKAKKDELQTIVQELTTKLYEEAAKQAQAQQEGGAEGAQKADDNVVDAEYEEVNDDQEKK.

A Phosphothreonine; by autocatalysis modification is found at Thr173. Positions 577-613 are disordered; the sequence is AKQAQAQQEGGAEGAQKADDNVVDAEYEEVNDDQEKK. Over residues 597-613 the composition is skewed to acidic residues; that stretch reads NVVDAEYEEVNDDQEKK.

This sequence belongs to the heat shock protein 70 family.

Functionally, acts as a chaperone. The polypeptide is Chaperone protein DnaK (Bacillus pumilus (strain SAFR-032)).